Reading from the N-terminus, the 222-residue chain is Protein SHI RELATED SEQUENCE 4 (222 aa).

6 residues coordinate Zn(2+): C72, C75, C83, C88, C92, and C99. A DNA-binding region (zn(2)-C6 fungal-type; degenerate) is located at residues 72–99; it reads CQECGNQAKKGCTHGRCRTCCKSNGLHC. Positions 114–137 are disordered; it reads RERQQQLQTPTSNPTGGSGRVGKY. Polar residues predominate over residues 118-128; that stretch reads QQLQTPTSNPT. Positions 191 to 194 match the Required for homo- and heterodimerization motif; the sequence is IAGH.

This sequence belongs to the SHI protein family. Expressed in cotyledon tips, leaf primordia, hydathodes, stipules, and lateral root primordia and weakly at the edges of petals and sepals.

Its subcellular location is the nucleus. Transcription activator that binds DNA on 5'-ACTCTAC-3' and promotes auxin homeostasis-regulating gene expression (e.g. YUC genes), as well as genes affecting stamen development, cell expansion and timing of flowering. Synergistically with other SHI-related proteins, regulates gynoecium, stamen and leaf development in a dose-dependent manner, controlling apical-basal patterning. Promotes style and stigma formation, and influences vascular development during gynoecium development. May also have a role in the formation and/or maintenance of the shoot apical meristem (SAM). The sequence is that of Protein SHI RELATED SEQUENCE 4 (SRS4) from Arabidopsis thaliana (Mouse-ear cress).